A 586-amino-acid chain; its full sequence is MERDSHGNASPARTPSAGASPAQASPAGTPPGRASPAQASPAQASPAGTPPGRASPAQASPAGTPPGRASPGRASPAQASPAQASPARASPALASLSRSSSGRSSSARSASVTTSPTRVYLVRATPVGAVPIRSSPARSAPATRATRESPGTSLPKFTWREGQKQLPLIGCVLLLIALVVSLIILFQFWQGHTGIRYKEQRESCPKHAVRCDGVVDCKLKSDELGCVRFDWDKSLLKIYSGSSHQWLPICSSNWNDSYSEKTCQQLGFESAHRTTEVAHRDFANSFSILRYNSTIQESLHRSECPSQRYISLQCSHCGLRAMTGRIVGGALASDSKWPWQVSLHFGTTHICGGTLIDAQWVLTAAHCFFVTREKVLEGWKVYAGTSNLHQLPEAASIAEIIINSNYTDEEDDYDIALMRLSKPLTLSAHIHPACLPMHGQTFSLNETCWITGFGKTRETDDKTSPFLREVQVNLIDFKKCNDYLVYDSYLTPRMMCAGDLRGGRDSCQGDSGGPLVCEQNNRWYLAGVTSWGTGCGQRNKPGVYTKVTEVLPWIYSKMEVRSLQQDTAPSRLGTSSGGDPGGAPRL.

2 disordered regions span residues M1–S115 and P131–F157. Residues M1 to Q165 lie on the Cytoplasmic side of the membrane. The stretch at A9–R13 is one 1-1 repeat. The segment at A9 to L93 is 13 X 5 AA repeats of A-S-P-A-[GLQR]. Residues T14–G18 form a 2-1; approximate repeat. Residues T14–G52 show a composition bias toward low complexity. Positions T14–R68 are 4 X 5 AA repeats of T-P-P-G-R. 10 consecutive repeat copies span residues A19–Q23, A24–G28, T29–R33, A34–Q38, A39–Q43, A44–G48, T49–R53, A54–Q58, A59–G63, and T64–R68. One copy of the 1-9; approximate repeat lies at A69–Q78. Low complexity-rich tracts occupy residues A69–S111 and R133–R144. 3 tandem repeats follow at residues A79 to Q83, A84 to R88, and A89 to L93. Residues L166 to F186 traverse the membrane as a helical; Signal-anchor for type II membrane protein segment. Residues Q187–L586 are Extracellular-facing. The region spanning I195–R325 is the SRCR domain. Positions C204–C226 constitute an LDL-receptor class A domain. Cystine bridges form between C250–C314, C263–C317, and C351–C367. N255 and N292 each carry an N-linked (GlcNAc...) asparagine glycan. The 234-residue stretch at I326 to E559 folds into the Peptidase S1 domain. The active-site Charge relay system is the H366. N405 carries N-linked (GlcNAc...) asparagine glycosylation. D414 (charge relay system) is an active-site residue. N445 carries an N-linked (GlcNAc...) asparagine glycan. Intrachain disulfides connect C448–C517, C480–C496, and C507–C535. The active-site Charge relay system is the S511. Positions Q565 to T574 are enriched in polar residues. Positions Q565–L586 are disordered. Over residues S575–L586 the composition is skewed to gly residues.

The protein belongs to the peptidase S1 family. Interacts with SPINT1/HAI-1; the interaction promotes the phosphorylation and cell membrane localization of TMPRSS13. Interacts with SPINT2/HAI-2; the interaction promotes the phosphorylation and cell membrane localization of TMPRSS13. Post-translationally, the inactive zymogen is post-translationally modified and then trafficked to the cell surface, whereby it undergoes autocatalytic cleavage resulting in an activated form that is released extracellularly. Phosphorylation is required for localization at the cell surface. Phosphorylation increases following inhibition of protease activity by SPINT2/HAI-2. In terms of processing, N-glycosylation of Asn-405 and Asn-445 is required for exit from the endoplasmic reticulum and trafficking to the cell surface. Also required for autocleavage of the zymogen, activation and secretion of the mature protein. Expressed in placenta. In terms of tissue distribution, predominantly expressed in lung, placenta, pancreas, and prostate. As to expression, expressed in lung, placenta, pancreas, and prostate. Weakly expressed in testis and peripheral blood lymphocytes.

Its subcellular location is the cell membrane. The protein resides in the secreted. It is found in the cytoplasm. Its activity is regulated as follows. Cleavage of HGF is inhibited by SPINT1/HAI-1 via the BPTI/Kunitz inhibitor 1 domain. Its function is as follows. Serine protease. Cleaves the proform of PRSS8/prostasin to form the active protein. Cleaves the proform of HGF to form the active protein which promotes MAPK signaling. Promotes the formation of the stratum corneum and subsequently the epidermal barrier in embryos. The protein is Transmembrane protease serine 13 (TMPRSS13) of Homo sapiens (Human).